We begin with the raw amino-acid sequence, 261 residues long: Undecaprenyl-diphosphatase (261 aa).

A run of 7 helical transmembrane segments spans residues R38–F58, R75–V95, I106–V126, V136–G156, F181–L201, V217–I237, and S241–T261.

Belongs to the UppP family.

The protein localises to the cell inner membrane. The enzyme catalyses di-trans,octa-cis-undecaprenyl diphosphate + H2O = di-trans,octa-cis-undecaprenyl phosphate + phosphate + H(+). Its function is as follows. Catalyzes the dephosphorylation of undecaprenyl diphosphate (UPP). Confers resistance to bacitracin. This is Undecaprenyl-diphosphatase from Xylella fastidiosa (strain 9a5c).